The following is an 88-amino-acid chain: Metastasis-suppressor KiSS-1 (88 aa).

Over residues 1 to 13 (SVENSRPTGQQLE) the composition is skewed to polar residues. The tract at residues 1-88 (SVENSRPTGQ…REKDLPNYNW (88 aa)) is disordered. Over residues 33 to 55 (SATARLSRRGASLSSPAESSGSP) the composition is skewed to low complexity. Over residues 78-88 (QREKDLPNYNW) the composition is skewed to basic and acidic residues. A Phosphotyrosine modification is found at Tyr-86.

Belongs to the KISS1 family. In the hypothalamus, expression increases with puberty in both male and female monkeys. Robust expression in the region of the arcuate nucleus (ARC).

It localises to the secreted. Metastasis suppressor protein. May regulate events downstream of cell-matrix adhesion, perhaps involving cytoskeletal reorganization. Generates a C-terminally amidated peptide, metastin which functions as the endogenous ligand of the G-protein coupled receptor GPR54. The receptor is essential for normal gonadotropin-released hormone physiology and for puberty. The hypothalamic KiSS1/GPR54 system is a pivotal factor in central regulation of the gonadotropic axis at puberty and in adulthood. This Macaca mulatta (Rhesus macaque) protein is Metastasis-suppressor KiSS-1 (KISS1).